Here is a 914-residue protein sequence, read N- to C-terminus: Beta-mannosidase A (914 aa).

The first 20 residues, 1–20 (MRFTATAAALVASSIPATLG), serve as a signal peptide directing secretion. N-linked (GlcNAc...) asparagine glycans are attached at residues Asn39, Asn79, Asn230, Asn265, Asn299, Asn309, and Asn330. Glu462 acts as the Proton donor in catalysis. Asn591, Asn614, Asn641, Asn721, Asn744, Asn773, Asn784, and Asn909 each carry an N-linked (GlcNAc...) asparagine glycan.

Belongs to the glycosyl hydrolase 2 family. Beta-mannosidase A subfamily. As to quaternary structure, homodimer.

The protein localises to the secreted. It carries out the reaction Hydrolysis of terminal, non-reducing beta-D-mannose residues in beta-D-mannosides.. Its pathway is glycan metabolism; N-glycan degradation. Functionally, exoglycosidase that cleaves the single beta-linked mannose residue from the non-reducing end of beta-mannosidic oligosaccharides of various complexity and length. Involved in the degradation of polymeric mannan and galactomannan. The protein is Beta-mannosidase A (mndA) of Aspergillus flavus (strain ATCC 200026 / FGSC A1120 / IAM 13836 / NRRL 3357 / JCM 12722 / SRRC 167).